Reading from the N-terminus, the 405-residue chain is Teichoic acid D-alanyltransferase (405 aa).

At 1-9 (MLNLQPYEN) the chain is on the extracellular side. A helical membrane pass occupies residues 10-29 (PQYFVYLIIALLPVIIGMFK). The Cytoplasmic segment spans residues 30–33 (GFRM). Residues 34–49 (HWYESIFSLVFLVLIF) traverse the membrane as a helical segment. Over 50–53 (DADK) the chain is Extracellular. A helical membrane pass occupies residues 54 to 80 (WPQGKALLGYVVFNLLLVYAYFKYRTR). Topologically, residues 81 to 86 (EGSKNS) are cytoplasmic. The chain crosses the membrane as a helical span at residues 87 to 111 (TAVFYLSVALGIAHVAVVKFTPLFQ). Topologically, residues 112-121 (HHGSILGFLG) are extracellular. The chain crosses the membrane as a helical span at residues 122–138 (ISYLTFRVVGTIMEIRD). The Cytoplasmic segment spans residues 139 to 145 (GSIKDLN). An intramembrane segment occupies 146–175 (MWKFIQFLLFFPTISSGPIDRYRRFVKDYD). At 176 to 179 (RVPD) the chain is on the cytoplasmic side. A helical transmembrane segment spans residues 180–223 (PEHYAQLVTKAIHYLMLGFLYKFILGYIFGTLWLPSVEHMAMAS). Residues 224–232 (RGGAFLGLS) lie on the Extracellular side of the membrane. A helical membrane pass occupies residues 233 to 264 (WPVVGVMYAYSGYLFFDFAGYSLFAVAISYLM). At 265–274 (GIETPMNFNK) the chain is on the cytoplasmic side. Residues 275–310 (PWSHITSRLLNRWQLSLSFWFRDYIYMRFVFFMMKH) lie within the membrane without spanning it. Over 311–315 (KWIKS) the chain is Cytoplasmic. A helical membrane pass occupies residues 316-335 (RVWTAFVGYLVLFLIMGIWH). Residue His-335 is part of the active site. Residues 336 to 338 (GET) lie on the Extracellular side of the membrane. The helical transmembrane segment at 339 to 372 (WYYIVYGLFHAMLINLTDAWLRFKKKHKDFFPHN) threads the bilayer. Residues 373-378 (RATHYP) lie on the Cytoplasmic side of the membrane. The helical transmembrane segment at 379–399 (SPFSMTANAVCFSFLIFSGFL) threads the bilayer. At 400 to 405 (DKLWFH) the chain is on the extracellular side.

This sequence belongs to the membrane-bound acyltransferase family.

Its subcellular location is the cell membrane. The protein operates within cell wall biogenesis; lipoteichoic acid biosynthesis. Functionally, O-acyltransferase that catalyzes D-alanylation of both teichoic acid and lipoteichoic acid (LTA). D-alanylation of LTA plays an important role in modulating the properties of the cell wall in Gram-positive bacteria, influencing the net charge of the cell wall. Catalyzes D-alanylation from DltC carrier protein. This chain is Teichoic acid D-alanyltransferase, found in Lacticaseibacillus rhamnosus (Lactobacillus rhamnosus).